We begin with the raw amino-acid sequence, 309 residues long: MTLPFQITVPGSSANLGPGFDSVGLAVNRYLTLTVTEGSEWHFSTQSADLVGIPSGKENLVYQVAEHVASQLEKTLPPCHVQMESNIPLARGLGSSAAAIVAGIELANQLLGQPLAAEDKVRFGSLWEGHPDNIAPSVYGGLVIGTHLSTETHVIHGGVPDLDLVLLVPKEELLTKKARGILPESLSYKEAVRGSSVSNVLVAALLKENWELVGEMMVRDVFHHPYRLGLVPHLQEVIRYVKEETEAYGAALSGAGPTMLCLSPKGRGEWVQKQLQKQYPQFEVDVLKPDDQGIQVHRVLSNQQQLPIG.

An ATP-binding site is contributed by 88 to 98 (PLARGLGSSAA).

It belongs to the GHMP kinase family. Homoserine kinase subfamily.

Its subcellular location is the cytoplasm. The enzyme catalyses L-homoserine + ATP = O-phospho-L-homoserine + ADP + H(+). The protein operates within amino-acid biosynthesis; L-threonine biosynthesis; L-threonine from L-aspartate: step 4/5. Functionally, catalyzes the ATP-dependent phosphorylation of L-homoserine to L-homoserine phosphate. This chain is Homoserine kinase, found in Halalkalibacterium halodurans (strain ATCC BAA-125 / DSM 18197 / FERM 7344 / JCM 9153 / C-125) (Bacillus halodurans).